Here is a 276-residue protein sequence, read N- to C-terminus: MTETDGFYKSREVFDPAEQYKMDHKRRGVALIFNHERFFWHLTLPERRGTNADRDNLTRRFSDLGFEVKCFNDLRAEELLLKIHEVSTSSHIDADCFICVFLSHGEGNHVYAYDAKIEIQTLTGLFKGDKCQSLVGKPKIFIIQACRGSQHDVPVVPLDMVDHQTDKLDNVTQVDAASVYTLPAGADFLMCYSVAEGYYSHRETVNGSWYIQDLCEMLARYGSSLEFTELLTLVNRKVSQRRVDFCKDPDAIGKKQVPCFASMLTKKLHFCPKPSK.

The propeptide occupies 1-5 (MTETD). A tri-arginine exosite region spans residues 25–27 (KRR). Phosphoserine is present on Ser-62. His-104 is an active-site residue. Positions 108 to 125 (NHVYAYDAKIEIQTLTGL) are 130's region. Cys-146 is an active-site residue. The propeptide occupies 163-175 (HQTDKLDNVTQVD). Ser-239 carries the phosphoserine modification. S-palmitoyl cysteine attachment occurs at residues Cys-246 and Cys-259.

It belongs to the peptidase C14A family. Heterotetramer that consists of two anti-parallel arranged heterodimers, each one formed by a 18 kDa (p18) and a 11 kDa (p11) subunit. Interacts with BIRC6/bruce. Interacts with RIPK3. In terms of assembly, heterotetramer that consists of two anti-parallel arranged heterodimers, each one formed by a 18 kDa (Caspase-6 subunit p18) and a 11 kDa (Caspase-6 subunit p11) subunit. Post-translationally, phosphorylated by NUAK1; phosphorylation inhibits self-activation. Phosphorylation at Ser-239 by AMP-activated protein kinase (PRKAA1 or PRKAA2) inhibits autocleavage, preventing caspase activation, thereby preventing hepatocyte apoptosis. Palmitoylation by ZDHHC17 blocks dimerization and subsequent activation, leading to inhibit the cysteine protease activity. In terms of processing, can be cleaved and activated by different caspases, depending on the context. Cleaved and activated by caspase-8 (CASP8) and subsequently by caspase-3 (CASP3). Can also undergo autoactivation by mediating autocleavage at Asp-162 and Asp-175, while it is not able to cleave its N-terminal disordered prodomain. Cleaved and activated by CASP1, possibly in the context of inflammation. In terms of tissue distribution, highly expressed in lung, liver, kidney, testis, and heart. Lower levels in spleen, skeletal muscle and brain. Expressed in neurons.

Its subcellular location is the cytoplasm. The protein localises to the nucleus. The enzyme catalyses Strict requirement for Asp at position P1 and has a preferred cleavage sequence of Val-Glu-His-Asp-|-.. During activation, the N-terminal disordered prodomain is removed by cleavage. Concomitantly, double cleavage gives rise to a large 18-kDa and a small 11-kDa subunit. The two large and two small subunits then assemble to form the active CASP6 complex. Can be cleaved and activated by different caspases, depending on the context. Cleaved and activated by caspase-8 (CASP8) and subsequently by caspase-3 (CASP3). Can also undergo autoactivation by mediating autocleavage at Asp-162 and Asp-175, while it is not able to cleave its N-terminal disordered prodomain. Intramolecular cleavage at Asp-175 is a prerequisite for CASP6 self-activation. Cleaved and activated by CASP1 in neurons, possibly in the context of inflammation. Phosphorylation at Ser-239 inhibits autocleavage, preventing caspase activation. Cysteine protease that plays essential roles in programmed cell death, axonal degeneration, development and innate immunity. Acts as a non-canonical executioner caspase during apoptosis: localizes in the nucleus and cleaves the nuclear structural protein NUMA1 and lamin A/LMNA thereby inducing nuclear shrinkage and fragmentation. Lamin-A/LMNA cleavage is required for chromatin condensation and nuclear disassembly during apoptotic execution. Acts as a regulator of liver damage by promoting hepatocyte apoptosis: in absence of phosphorylation by AMP-activated protein kinase (AMPK), catalyzes cleavage of BID, leading to cytochrome c release, thereby participating in nonalcoholic steatohepatitis. Cleaves PARK7/DJ-1 in cells undergoing apoptosis. Involved in intrinsic apoptosis by mediating cleavage of RIPK1. Furthermore, cleaves many transcription factors such as NF-kappa-B and cAMP response element-binding protein/CREBBP. Cleaves phospholipid scramblase proteins XKR4 and XKR9. In addition to apoptosis, involved in different forms of programmed cell death. Plays an essential role in defense against viruses by acting as a central mediator of the ZBP1-mediated pyroptosis, apoptosis, and necroptosis (PANoptosis), independently of its cysteine protease activity. PANoptosis is a unique inflammatory programmed cell death, which provides a molecular scaffold that allows the interactions and activation of machinery required for inflammasome/pyroptosis, apoptosis and necroptosis. Mechanistically, interacts with RIPK3 and enhances the interaction between RIPK3 and ZBP1, leading to ZBP1-mediated inflammasome activation and cell death. Plays an essential role in axon degeneration during axon pruning which is the remodeling of axons during neurogenesis but not apoptosis. Regulates B-cell programs both during early development and after antigen stimulation. Functionally, (Microbial infection) Proteolytically cleaves the N protein of coronaviruses. The cleavage leads to two fragments and modulates coronavirus replication by regulating IFN signaling. The two fragments produced by the cleavage interact with IRF3 inhibiting its nuclear translocation after activation and reduce the expression of IFNB and IFN-stimulated genes. This is Caspase-6 from Mus musculus (Mouse).